Here is a 130-residue protein sequence, read N- to C-terminus: 3-aminoacrylate deaminase RutC (130 aa).

Belongs to the RutC family.

It carries out the reaction (Z)-3-aminoacrylate + H2O + H(+) = 3-oxopropanoate + NH4(+). Involved in pyrimidine catabolism. Catalyzes the deamination of 3-aminoacrylate to malonic semialdehyde, a reaction that can also occur spontaneously. RutC may facilitate the reaction and modulate the metabolic fitness, rather than catalyzing essential functions. The sequence is that of 3-aminoacrylate deaminase RutC from Haliangium ochraceum (strain DSM 14365 / JCM 11303 / SMP-2).